The following is a 42-amino-acid chain: Photosystem I reaction center subunit IX (42 aa).

A helical membrane pass occupies residues 7–27 (YLSVAPVLSTLWFVSLAGLLI).

Belongs to the PsaJ family.

It localises to the plastid. The protein resides in the chloroplast thylakoid membrane. Functionally, may help in the organization of the PsaE and PsaF subunits. The sequence is that of Photosystem I reaction center subunit IX from Capsella bursa-pastoris (Shepherd's purse).